We begin with the raw amino-acid sequence, 633 residues long: MATVRICVCGDEGTGKSSLITSLVKGVFVTNKIQPILPQITIPPTIGTPENVTTTTVVDTSALPQERSNLAREIRKSNVILLVYSDHYSYERVALFWLPYFRSLGVNVPVVLCANKSDLAADHSEAQVIEEEMLPLMAEFKEIDSCIRTSAREHRNVNEAFFLCQKAVTHPIAPLFDSKESALKPAAVAALQRIFYLSDKDRDGYLSDKELEDFQMRCFEKPLSEEDLVHIKETIQKTHPTSVAPSGIDCRGFIHLNKMYAEKGRHETVWIILRAFQYTDNLSLQESFLHPRFEVPPYASAELSPEGYRFFVNLFLLSDKDNDGGLNDAELASLFAPTPGLPASWADGSFPSSTVRNEAGHVTLQGWLAQWSMTTFTSPKTTLEYLAYLGFESSDRSNPSTTAALKVTRPRKRRKRPGRVGRNVVLGHVLGPPGSGKSALLDAFLARGFSTTYHPTIQPRTAVNTVELPGGKQCYLILDELGELEPAILENQVKLLDQCDVIVYTYDSSDPDSFAYIPELRSKYPHLEELPSVFVALKADLDRTTQRAEYQPHEYTAMLNMPSSPLHVSVTWSSMQEVFVHIAEAAMEPSTAFPRSEEDVEGKWMAWGIALGAVVCAGAAAVMIWRRVSGSGT.

Residues 1–170 (MATVRICVCG…FFLCQKAVTH (170 aa)) enclose the Miro 1 domain. Residues 1–603 (MATVRICVCG…PRSEEDVEGK (603 aa)) are Cytoplasmic-facing. Residues 10-17 (GDEGTGKS), 59-63 (DTSAL), and 115-118 (NKSD) each bind GTP. EF-hand domains follow at residues 186–221 (AAVA…CFEK) and 306–341 (EGYR…TPGL). Residues Asp199, Asp201, Asp203, Tyr205, Glu210, Asp319, Asp321, Asp323, and Glu330 each coordinate Ca(2+). Residues 398 to 418 (NPSTTAALKVTRPRKRRKRPG) form a disordered region. Over residues 408-418 (TRPRKRRKRPG) the composition is skewed to basic residues. The Miro 2 domain occupies 422 to 588 (RNVVLGHVLG…FVHIAEAAME (167 aa)). Residues 431–438 (GPPGSGKS), 467–471 (ELPGG), and 537–540 (LKAD) contribute to the GTP site. A helical; Anchor for type IV membrane protein membrane pass occupies residues 604–624 (WMAWGIALGAVVCAGAAAVMI). Residues 625-633 (WRRVSGSGT) are Mitochondrial intermembrane-facing.

The protein belongs to the mitochondrial Rho GTPase family.

It localises to the mitochondrion outer membrane. Mitochondrial GTPase involved in mitochondrial trafficking. Probably involved in control of anterograde transport of mitochondria and their subcellular distribution. This Aspergillus oryzae (strain ATCC 42149 / RIB 40) (Yellow koji mold) protein is Mitochondrial Rho GTPase 1 (gem1).